A 233-amino-acid chain; its full sequence is tRNA (guanine-N(1)-)-methyltransferase (233 aa).

S-adenosyl-L-methionine is bound by residues Gly-121 and 140–145 (IGDYIL).

This sequence belongs to the RNA methyltransferase TrmD family. In terms of assembly, homodimer.

Its subcellular location is the cytoplasm. The enzyme catalyses guanosine(37) in tRNA + S-adenosyl-L-methionine = N(1)-methylguanosine(37) in tRNA + S-adenosyl-L-homocysteine + H(+). In terms of biological role, specifically methylates guanosine-37 in various tRNAs. In Endomicrobium trichonymphae, this protein is tRNA (guanine-N(1)-)-methyltransferase.